Consider the following 636-residue polypeptide: p-hydroxybenzoate-m-hydroxylase A (636 aa).

FAD-binding positions include 10–39, 241–243, Tyr289, and Asp310; these read DIVI…HIDN and RLY. Residues 11–28 traverse the membrane as a helical segment; it reads IVIVGAGPVGIVLSLCMS.

This sequence belongs to the PheA/TfdB FAD monooxygenase family. FAD serves as cofactor.

Its subcellular location is the membrane. The catalysed reaction is 4-hydroxybenzoate + NADH + O2 + H(+) = 3,4-dihydroxybenzoate + NAD(+) + H2O. It catalyses the reaction 4-hydroxybenzoate + NADPH + O2 + H(+) = 3,4-dihydroxybenzoate + NADP(+) + H2O. Its function is as follows. FAD-dependent monooxygenase; part of the benzoic acid degradation pathway also known as the protocatechuic acid pathway. Benzoic acid debradation begins with the conversion of benzoic acid into 4-hydroxybenzoic acid through hydroxylation by the benzoate-4-monooxygenase bphA, and its partner NADPH-cytochrome P450 reductase cprA which act as a mediator in electron donation from NADPH. 4-Hydroxybenzoic acid is then converted into 3,4-dihydroxybenzoic acid (also called protocatechuic acid) by the p-hydroxybenzoate-m-hydroxylase phhA. Protocatechuic acid is converted into 3-carboxy-cis,cis-muconic acid by the intradiol ring-cleavage dioxygenase prcA, which is further metabolized through the 3-oxoadipate pathway to finally enter the tricarboxylic acid cycle (TCA). This chain is p-hydroxybenzoate-m-hydroxylase A, found in Aspergillus niger (strain ATCC MYA-4892 / CBS 513.88 / FGSC A1513).